A 482-amino-acid chain; its full sequence is ATP synthase subunit beta, chloroplastic (482 aa).

162–169 lines the ATP pocket; sequence GGAGVGKT.

Belongs to the ATPase alpha/beta chains family. As to quaternary structure, F-type ATPases have 2 components, CF(1) - the catalytic core - and CF(0) - the membrane proton channel. CF(1) has five subunits: alpha(3), beta(3), gamma(1), delta(1), epsilon(1). CF(0) has four main subunits: a(1), b(1), b'(1) and c(9-12).

The protein resides in the plastid. It is found in the chloroplast thylakoid membrane. It catalyses the reaction ATP + H2O + 4 H(+)(in) = ADP + phosphate + 5 H(+)(out). Its function is as follows. Produces ATP from ADP in the presence of a proton gradient across the membrane. The catalytic sites are hosted primarily by the beta subunits. The chain is ATP synthase subunit beta, chloroplastic from Pleurastrum terricola (Filamentous green alga).